The following is a 355-amino-acid chain: Guanine nucleotide-binding protein subunit alpha-14 (355 aa).

The G-alpha domain maps to 34–355 (RELKLLLLGT…QLNLREFNLV (322 aa)). The segment at 37–50 (KLLLLGTGESGKST) is G1 motif. GTP contacts are provided by residues 42-49 (GTGESGKS), 176-182 (LRVRVPT), 201-205 (DVGGQ), 270-273 (NKKD), and alanine 327. Mg(2+) is bound at residue serine 49. Positions 174 to 182 (DVLRVRVPT) are G2 motif. Residue arginine 179 is modified to ADP-ribosylarginine; by cholera toxin. Position 182 (threonine 182) interacts with Mg(2+). Residues 197–206 (FRMVDVGGQR) form a G3 motif region. Residues 266–273 (ILFLNKKD) are G4 motif. The G5 motif stretch occupies residues 325–330 (TCATDT).

Belongs to the G-alpha family. G(q) subfamily. G proteins are composed of 3 units; alpha, beta and gamma. The alpha chain contains the guanine nucleotide binding site.

In terms of biological role, guanine nucleotide-binding proteins (G proteins) are involved as modulators or transducers in various transmembrane signaling systems. In Homo sapiens (Human), this protein is Guanine nucleotide-binding protein subunit alpha-14 (GNA14).